The chain runs to 202 residues: MAKVSVLNVAVLENPSPFHSPFRFEISFECSEALADDLEWKIIYVGSAESEEFDQILDSVLVGPVPAGRHMFVFQADAPNPSLIPETDAVGVTVVLITCTYHGQEFIRVGYYVNNEYLNPELRENPPMKPDFSQLQRNILASNPRVTRFHINWDNNMDRLEAIETQDPSLGCGLPLNCTPIKGLGLPGCIPGLLPENSMDCI.

Residues 1–155 are interaction with CHAF1B; the sequence is MAKVSVLNVA…VTRFHINWDN (155 aa). Residues 1-156 are interaction with histone H3; sequence MAKVSVLNVA…TRFHINWDNN (156 aa). Serine 198 carries the post-translational modification Phosphoserine; by TLK2.

This sequence belongs to the ASF1 family. In terms of assembly, interacts with histone H3 (via C-terminus), including histone H3.1, H3.2 and H3.3, and histone H4; the interaction with H3 is direct. Interacts with the CHAF1A, CHAF1B and RBBP4 subunits of the CAF-1 complex. Interacts with HAT1, NASP and TAF1. Found in a soluble complex with NASP and histones H3 and H4; the interaction with NASP is probably indirect and mediated by H3-H4. Interacts with CDAN1. Found in a cytosolic complex with IPO4 and histones H3 and H4. Interacts with CREBBP. Post-translationally, phosphorylated by TLK1 and TLK2. Highly expressed in testis and at lower levels in colon, small intestine and thymus.

It is found in the nucleus. It localises to the cytoplasm. The protein resides in the cytosol. Histone chaperone that facilitates histone deposition and histone exchange and removal during nucleosome assembly and disassembly. Cooperates with chromatin assembly factor 1 (CAF-1) to promote replication-dependent chromatin assembly. Also involved in the nuclear import of the histone H3-H4 dimer together with importin-4 (IPO4): specifically recognizes and binds newly synthesized histones with the monomethylation of H3 'Lys-9' (H3K9me1) and diacetylation at 'Lys-5' and 'Lys-12' of H4 (H4K5K12ac) marks in the cytosol. Does not participate in replication-independent nucleosome deposition which is mediated by ASF1A and HIRA. Required for gonad development. This Homo sapiens (Human) protein is Histone chaperone ASF1B.